The following is a 364-amino-acid chain: Putative apoptosis inhibitor ORF42 (364 aa).

One copy of the BIR 1 repeat lies at 24–89 (RLATFRGYEY…CREGVVSAPQ (66 aa)). The segment at 83-126 (GVVSAPQQQPPPPPSTSIGAVGGDPRPEDMNVPERGWDPPMSKD) is disordered. Basic and acidic residues predominate over residues 117–126 (RGWDPPMSKD). BIR repeat units lie at residues 127 to 193 (PKST…PLVV) and 236 to 300 (RIAS…ANMA). An RING-type zinc finger spans residues 315–350 (CVICLGAKADTILKPCLHYSLCYGCSTQVQKCPLCR).

Functionally, may act as an apoptosis inhibitor. The sequence is that of Putative apoptosis inhibitor ORF42 from Magallana gigas (Pacific oyster).